Consider the following 88-residue polypeptide: uncharacterized protein (88 aa).

Helical transmembrane passes span 3–23 (VFILFYLWIVPIVIGILCSVA), 33–53 (VAPGIAMIVLSIISLITAFTA), and 61–81 (FIGGMFLFGTFLVGSAFPFFF).

It localises to the cell membrane. This is an uncharacterized protein from Bacillus subtilis (strain 168).